A 517-amino-acid polypeptide reads, in one-letter code: Sphingolipid C9-methyltransferase A (517 aa).

Transmembrane regions (helical) follow at residues 58-78 (LLIL…GGGL) and 80-100 (TTIF…WSIA). Residues 223–224 (YT), 286–291 (TLGRNQ), and 316–317 (YR) each bind S-adenosyl-L-methionine. N290 carries N-linked (GlcNAc...) asparagine glycosylation. N-linked (GlcNAc...) asparagine glycosylation occurs at N478.

Belongs to the CFA/CMAS family.

The protein localises to the membrane. The catalysed reaction is a (4E,8E)-4-sphinga-4,8-dienine ceramide + S-adenosyl-L-methionine = a 9-methyl-(4E,8E)-sphinga-4,8-dienine ceramide + S-adenosyl-L-homocysteine + H(+). It functions in the pathway lipid metabolism; sphingolipid metabolism. Functionally, catalyzes methylation of the sphingoid base component of glucosylceramides (GluCers) at the C9-position. Sphingolipid C9-methylation requires 4,8-desaturated ceramides as substrates. Glucosylceramides play important roles in growth, differentiation and pathogenicity. The methyl group at the C9-position distinguishes fungal glucosylceramides from those of plants and animals and may thus play a role in host-pathogen interactions enabling the host to recognize the fungal attack and initiate specific defense responses. This is Sphingolipid C9-methyltransferase A from Emericella nidulans (strain FGSC A4 / ATCC 38163 / CBS 112.46 / NRRL 194 / M139) (Aspergillus nidulans).